Consider the following 161-residue polypeptide: Anaerobic nitrite reductase HB2 (161 aa).

Positions 5-154 (VFTEKQEALV…LALAIKAEMK (150 aa)) constitute a Globin domain. The Homodimerization signature appears at 38-42 (EIAPA). S48, K62, H66, and H101 together coordinate heme b. The Homodimerization signature appears at 108–120 (DPHFEVVKEALVR).

The protein belongs to the plant globin family. As to quaternary structure, homodimer. Requires heme b as cofactor.

It localises to the cytoplasm. The protein resides in the nucleus. The catalysed reaction is Fe(III)-heme b-[protein] + nitric oxide + H2O = Fe(II)-heme b-[protein] + nitrite + 2 H(+). Functionally, phytoglobin that reduces nitrite to nitric oxide (NO) under anoxic conditions (e.g. during flooding or in waterlogged soil). May not function as an oxygen storage or transport protein. Has an unusually high affinity for O(2) through an hexacoordinate heme iron because of a very low dissociation constant. This is Anaerobic nitrite reductase HB2 from Brassica napus (Rape).